The chain runs to 149 residues: Transcriptional repressor NrdR (149 aa).

A zinc finger lies at C3–C34. The ATP-cone domain maps to P49 to E139.

Belongs to the NrdR family. It depends on Zn(2+) as a cofactor.

Negatively regulates transcription of bacterial ribonucleotide reductase nrd genes and operons by binding to NrdR-boxes. The sequence is that of Transcriptional repressor NrdR from Yersinia pseudotuberculosis serotype O:1b (strain IP 31758).